Consider the following 373-residue polypeptide: MTTEKVNLLDFDRKGLRTFFAEELGEKAFRAEQVMKWIYHFGCDDFDQMNNINKQLREKLKAKCEIRAPYVSEAQHSADGTIKWAMRVGDQDVETVYIPEDDRATLCVSSQVGCALECKFCSTAQQGFNRNLRVSEIIGQVWRAAREIGLEKETGRRPITNVVMMGMGEPLLNMKNLIPALEIMLDDLGFGLSKRRVTVSTSGVVSGLEQMIGQIDVALAISLHAPNDKLRSEIMPINDRWNIEAFLEVVRRYIASSNANRGKVTVEYVLLDHVNDGTEHAHELAELLKGTPCKINLIPFNPYPGSPYKKPSNSRIDRFQKTLMQYEHTVTIRKTRGDDIDAACGQLVGDVIDRTKRTKAKQFDGQAIPVKTL.

E94 acts as the Proton acceptor in catalysis. The Radical SAM core domain maps to 100-339 (EDDRATLCVS…VTIRKTRGDD (240 aa)). A disulfide bond links C107 and C344. Residues C114, C118, and C121 each coordinate [4Fe-4S] cluster. S-adenosyl-L-methionine-binding positions include 168 to 169 (GE), S200, 222 to 224 (SLH), and N301. C344 (S-methylcysteine intermediate) is an active-site residue.

This sequence belongs to the radical SAM superfamily. RlmN family. [4Fe-4S] cluster is required as a cofactor.

It localises to the cytoplasm. It carries out the reaction adenosine(2503) in 23S rRNA + 2 reduced [2Fe-2S]-[ferredoxin] + 2 S-adenosyl-L-methionine = 2-methyladenosine(2503) in 23S rRNA + 5'-deoxyadenosine + L-methionine + 2 oxidized [2Fe-2S]-[ferredoxin] + S-adenosyl-L-homocysteine. It catalyses the reaction adenosine(37) in tRNA + 2 reduced [2Fe-2S]-[ferredoxin] + 2 S-adenosyl-L-methionine = 2-methyladenosine(37) in tRNA + 5'-deoxyadenosine + L-methionine + 2 oxidized [2Fe-2S]-[ferredoxin] + S-adenosyl-L-homocysteine. Its function is as follows. Specifically methylates position 2 of adenine 2503 in 23S rRNA and position 2 of adenine 37 in tRNAs. m2A2503 modification seems to play a crucial role in the proofreading step occurring at the peptidyl transferase center and thus would serve to optimize ribosomal fidelity. This is Dual-specificity RNA methyltransferase RlmN from Vibrio cholerae serotype O1 (strain M66-2).